The sequence spans 746 residues: Iron-sulfur clusters transporter ABCB7, mitochondrial (746 aa).

A mitochondrion-targeting transit peptide spans 1 to 19 (MAPMLVSLNCGIRVQRRTL). Residues 20–133 (TLLIRQTSSY…KDRPDLRARV (114 aa)) lie on the Mitochondrial matrix side of the membrane. Positions 133-429 (VAVSLGLLAG…LGTVYRETRQ (297 aa)) constitute an ABC transmembrane type-1 domain. Residues 134 to 154 (AVSLGLLAGAKLTNVMVPFMF) form a helical membrane-spanning segment. Residues 155–176 (KYAVDELNQMSGHMLNLNDAPS) are Mitochondrial intermembrane-facing. The chain crosses the membrane as a helical span at residues 177 to 199 (TVATMTTAVLIGYGVSRAGSALF). The Mitochondrial matrix segment spans residues 200–252 (NELRNTVFGKVAQSSIRRIAKNVFLHLHNLDLGFHLSRQTGALSKAIDRGTRG). A helical transmembrane segment spans residues 253 to 273 (ISFVLSALVFNLGPTVFEMFL). Residues 274-283 (VSAILYYKCG) are Mitochondrial intermembrane-facing. Residues 284–304 (GEFAAVALGTLSAYTIFTILV) traverse the membrane as a helical segment. Topologically, residues 305–375 (TQWRTRFRIE…TLAMLNFGQS (71 aa)) are mitochondrial matrix. Glutathione-binding positions include 308–312 (RTRFR) and 371–374 (NFGQ). The chain crosses the membrane as a helical span at residues 376–396 (AIFSVGLTAIMLLASKGIAAG). Topologically, residues 397–402 (NMTVGD) are mitochondrial intermembrane. The chain crosses the membrane as a helical span at residues 403-423 (LVMVNGLLFQLSLPLNFLGTV). Position 421 (glycine 421) interacts with glutathione. Residues 424 to 746 (YRETRQALID…SVKGCGNCSC (323 aa)) lie on the Mitochondrial matrix side of the membrane. The region spanning 465–699 (IRFEDVYFEY…PGSLYAELWN (235 aa)) is the ABC transporter domain. Residues tyrosine 474 and 498–505 (GGSGSGKS) each bind ATP. The interval 708-728 (SRKSSSAPAAERLSQKEEERK) is disordered.

Belongs to the ABC transporter superfamily. ABCB family. Heavy Metal importer (TC 3.A.1.210) subfamily. As to quaternary structure, homodimer.

It localises to the mitochondrion inner membrane. It is found in the mitochondrion. It carries out the reaction (glutathione)4[2Fe(III)-2S] cluster(in) + ATP + H2O = (glutathione)4[2Fe(III)-2S] cluster(out) + ADP + phosphate + H(+). Functionally, exports glutathione-coordinated iron-sulfur clusters such as [2Fe-2S]-(GS)4 cluster from the mitochondria to the cytosol in an ATP-dependent manner allowing the assembly of the cytosolic iron-sulfur (Fe/S) cluster-containing proteins and participates in iron homeostasis. May play a role in iron and lipid metabolism. The polypeptide is Iron-sulfur clusters transporter ABCB7, mitochondrial (Oryzias latipes (Japanese rice fish)).